A 486-amino-acid chain; its full sequence is D-mannonate oxidoreductase (486 aa).

An NAD(+)-binding site is contributed by 25–36 (IVHLGCGAFHRA).

It belongs to the mannitol dehydrogenase family. UxuB subfamily.

The catalysed reaction is D-mannonate + NAD(+) = keto-D-fructuronate + NADH + H(+). It functions in the pathway carbohydrate metabolism; pentose and glucuronate interconversion. This chain is D-mannonate oxidoreductase (uxuB), found in Escherichia coli (strain K12).